Reading from the N-terminus, the 159-residue chain is Ribosomal RNA large subunit methyltransferase H (159 aa).

Residues Leu-76, Gly-107, and 126–131 (LSKLTM) contribute to the S-adenosyl-L-methionine site.

The protein belongs to the RNA methyltransferase RlmH family. In terms of assembly, homodimer.

The protein resides in the cytoplasm. It catalyses the reaction pseudouridine(1915) in 23S rRNA + S-adenosyl-L-methionine = N(3)-methylpseudouridine(1915) in 23S rRNA + S-adenosyl-L-homocysteine + H(+). Specifically methylates the pseudouridine at position 1915 (m3Psi1915) in 23S rRNA. This is Ribosomal RNA large subunit methyltransferase H from Acinetobacter baumannii (strain AB307-0294).